A 28-amino-acid polypeptide reads, in one-letter code: Somatostatin-2 (28 aa).

The cysteines at positions 17 and 28 are disulfide-linked.

The protein belongs to the somatostatin family.

Its subcellular location is the secreted. Somatostatin inhibits the release of somatotropin. The sequence is that of Somatostatin-2 (sst2) from Oreochromis niloticus (Nile tilapia).